The chain runs to 564 residues: Large neutral amino acids transporter small subunit 3 (564 aa).

A helical membrane pass occupies residues 20–40 (VVENLFFSAVLLGWASLLIML). N-linked (GlcNAc...) asparagine glycans are attached at residues Asn-54 and Asn-57. 5 helical membrane-spanning segments follow: residues 78-98 (LGFT…GILM), 105-124 (PLRL…MALA), 131-151 (LSPL…CLTF), 165-185 (STFM…FPGI), and 191-211 (AGVP…LIFL). Residues Ser-262 and Ser-267 each carry the phosphoserine modification. 2 helical membrane passes run 303–323 (IFLW…FYMG) and 357–377 (SIFG…GYIM). Asn-396 carries an N-linked (GlcNAc...) asparagine glycan. At Ser-398 the chain carries Phosphoserine. 4 helical membrane-spanning segments follow: residues 424–444 (AINA…ACLI), 451–471 (LLAF…CGGL), 490–510 (LISA…VGPL), and 515–535 (FWVN…PSYL). Asn-558 carries an N-linked (GlcNAc...) asparagine glycan.

Belongs to the SLC43A transporter (TC 2.A.1.44) family. In terms of tissue distribution, expressed in the kidney cortex as well as liver, pancreas, and skeletal muscle. In kidney expressed in the glomerular tuft (at protein level). Expressed in liver, skeletal muscle and pancreas (at protein level).

Its subcellular location is the cell membrane. It is found in the apical cell membrane. The protein localises to the endoplasmic reticulum membrane. It carries out the reaction D-leucine(in) = D-leucine(out). It catalyses the reaction L-leucine(in) = L-leucine(out). The enzyme catalyses L-isoleucine(in) = L-isoleucine(out). The catalysed reaction is L-methionine(in) = L-methionine(out). It carries out the reaction L-phenylalanine(in) = L-phenylalanine(out). It catalyses the reaction L-valine(in) = L-valine(out). In terms of biological role, uniport that mediates the transport of neutral amino acids such as L-leucine, L-isoleucine, L-valine, and L-phenylalanine. The transport activity is sodium ions-independent, electroneutral and mediated by a facilitated diffusion. The polypeptide is Large neutral amino acids transporter small subunit 3 (Mus musculus (Mouse)).